The sequence spans 21 residues: Fibrinogen beta chain (21 aa).

Residue Q1 is modified to Pyrrolidone carboxylic acid. Y6 is modified (sulfotyrosine).

Heterohexamer; disulfide linked. Contains 2 sets of 3 non-identical chains (alpha, beta and gamma). The 2 heterotrimers are in head to head conformation with the N-termini in a small central domain. Conversion of fibrinogen to fibrin is triggered by thrombin, which cleaves fibrinopeptides A and B from alpha and beta chains, and thus exposes the N-terminal polymerization sites responsible for the formation of the soft clot.

The protein localises to the secreted. Functionally, cleaved by the protease thrombin to yield monomers which, together with fibrinogen alpha (FGA) and fibrinogen gamma (FGG), polymerize to form an insoluble fibrin matrix. Fibrin has a major function in hemostasis as one of the primary components of blood clots. In addition, functions during the early stages of wound repair to stabilize the lesion and guide cell migration during re-epithelialization. Was originally thought to be essential for platelet aggregation, based on in vitro studies using anticoagulated blood. However subsequent studies have shown that it is not absolutely required for thrombus formation in vivo. Enhances expression of SELP in activated platelets. Maternal fibrinogen is essential for successful pregnancy. Fibrin deposition is also associated with infection, where it protects against IFNG-mediated hemorrhage. May also facilitate the antibacterial immune response via both innate and T-cell mediated pathways. The chain is Fibrinogen beta chain (FGB) from Odocoileus hemionus (Mule deer).